Consider the following 74-residue polypeptide: ATP synthase subunit 9, mitochondrial (74 aa).

A run of 2 helical transmembrane segments spans residues 12–32 and 50–70; these read LATI…AALI and ILGF…AFLL.

The protein belongs to the ATPase C chain family. In terms of assembly, F-type ATPases have 2 components, CF(1) - the catalytic core - and CF(0) - the membrane proton channel. CF(1) has five subunits: alpha(3), beta(3), gamma(1), delta(1), epsilon(1). CF(0) has three main subunits: a, b and c.

Its subcellular location is the mitochondrion membrane. Its function is as follows. Mitochondrial membrane ATP synthase (F(1)F(0) ATP synthase or Complex V) produces ATP from ADP in the presence of a proton gradient across the membrane which is generated by electron transport complexes of the respiratory chain. F-type ATPases consist of two structural domains, F(1) - containing the extramembraneous catalytic core and F(0) - containing the membrane proton channel, linked together by a central stalk and a peripheral stalk. During catalysis, ATP synthesis in the catalytic domain of F(1) is coupled via a rotary mechanism of the central stalk subunits to proton translocation. Part of the complex F(0) domain. A homomeric c-ring of probably 10 subunits is part of the complex rotary element. The protein is ATP synthase subunit 9, mitochondrial of Rhizopus oryzae (Mucormycosis agent).